The sequence spans 450 residues: D-inositol 3-phosphate glycosyltransferase (450 aa).

1D-myo-inositol 3-phosphate is bound at residue H26. UDP-N-acetyl-alpha-D-glucosamine contacts are provided by residues 32–33 and G40; that span reads QP. 1D-myo-inositol 3-phosphate contacts are provided by residues 37 to 42, K95, Y128, T152, and R172; that span reads DAGGMN. UDP-N-acetyl-alpha-D-glucosamine-binding residues include R246, K251, and Q313. Residues Y322, R323, and A325 each contribute to the Mg(2+) site. E335 and E343 together coordinate UDP-N-acetyl-alpha-D-glucosamine. T349 is a binding site for Mg(2+).

It belongs to the glycosyltransferase group 1 family. MshA subfamily. As to quaternary structure, homodimer.

It carries out the reaction 1D-myo-inositol 3-phosphate + UDP-N-acetyl-alpha-D-glucosamine = 1D-myo-inositol 2-acetamido-2-deoxy-alpha-D-glucopyranoside 3-phosphate + UDP + H(+). Catalyzes the transfer of a N-acetyl-glucosamine moiety to 1D-myo-inositol 3-phosphate to produce 1D-myo-inositol 2-acetamido-2-deoxy-glucopyranoside 3-phosphate in the mycothiol biosynthesis pathway. The polypeptide is D-inositol 3-phosphate glycosyltransferase (Mycolicibacterium vanbaalenii (strain DSM 7251 / JCM 13017 / BCRC 16820 / KCTC 9966 / NRRL B-24157 / PYR-1) (Mycobacterium vanbaalenii)).